A 376-amino-acid polypeptide reads, in one-letter code: dTDP-4-amino-4,6-dideoxygalactose transaminase (376 aa).

Position 181 is an N6-(pyridoxal phosphate)lysine (K181).

It belongs to the DegT/DnrJ/EryC1 family. Homotetramer. Requires pyridoxal 5'-phosphate as cofactor.

It carries out the reaction dTDP-4-amino-4,6-dideoxy-alpha-D-galactose + 2-oxoglutarate = dTDP-4-dehydro-6-deoxy-alpha-D-glucose + L-glutamate. The protein operates within bacterial outer membrane biogenesis; enterobacterial common antigen biosynthesis. Catalyzes the synthesis of dTDP-4-amino-4,6-dideoxy-D-galactose (dTDP-Fuc4N) from dTDP-4-keto-6-deoxy-D-glucose (dTDP-D-Glc4O) and L-glutamate. In Escherichia coli (strain K12), this protein is dTDP-4-amino-4,6-dideoxygalactose transaminase.